Reading from the N-terminus, the 1165-residue chain is MEIKEYNPREIEEKWSRYWIEKALYHVEKPDKRKKFSVVIPPPNVTGSLHMGHALNATLQDVIVRWQRMRGRECVWVPGFDHAGIATQYVVEKQLAKEGKSRLELGREEFLKKVWEWVPKSRNAIRTQLTKLGVSVDWKRERFTLDEGFSRAVRKAFRTLFEEGLIYRAEYIVNWCPNDRTALSDLEVEYEEEKGSLWYIKYPIVDENGKDTGEFITVATTRPETMLGDTAVAVNPNDDRYKHLVGKRARLPLVNWERKDLRGNSVSNLIPIIADERVKMDFGTGAVKITPAHDPLDFEIGKTHDLPFVRVIDETGRMNENAGDFAGMDRYEAREAIVAKLREDELLEKEEEITHSVGHCYRCKTVIEPMVSVQWFVKVSDPRIKDISIKVVEEGIKEREEKELFVQLAQVEELSVVIPLKEEGRHKIVVVLDKTAKFLVGKREGELAYIYYPKGDERTLEFAKRLAEEFKDYEFMVAYEGLPKIVVMGNEQLVEPGSYLFVYDGKKLDLYKLEGEKPKFLKTLGKGEADLEVTQKSIQIKPERIKKVEEREKRVKFIPEHWKKFYLDWMYNLKDWCISRQIWWGHRIPVWYCKDCGNVNVFTDDDFDRAHDKIIFNLIADGKIDQEFTPEEVEKVLKSPHFVHPEMTVLDFYKKFVFHRYYNMDITADSLRLLFTQDMNPMAMLTPGVSTRNIYKYDSQKKKWKMVLRCKKCGSENLEQERDVLDTWFSSALWPFGVFGWPESTEDLKNLYPTDLLVTGFDIIFFWVARMIMMGTHFMKDIPFYDVYVHALVRDKYGRKMSKTIGNVIDPLDIIERYGADALRFTLAILTVQGRDIKLAEEKFEGYKHFANKIWNAARYVLMNTPEDFIARIPYMAPLKPEDKWIITKLNETAEEVNKALENYQYSQAAHAIYEFFWSDYCDWYIEFTKERIYKKAPEDNEEEKAKVENERTTALYTLHYVLEKALRILHPFMPYITEELWHKLPNAEGESISLAEFPQKNEDEIYEEDKQKVERLKEIISAIRAIRSDLQIKPSEKIKASFKTESEFSRRVIQEFKNHILNLAKLESFEEVSQRPQNTVATFSKDTEIYVHIEGHVDLDKLIQSYEKKREKLLKELERVNKKLSNENFLKKAPVEVVEKEKQIKEELENDLKKVEEILKVLRS.

A 'HIGH' region motif is present at residues 43–53; it reads PNVTGSLHMGH. The 'KMSKS' region motif lies at 800–804; it reads KMSKT. Lys803 lines the ATP pocket. Coiled coils occupy residues 1001 to 1032 and 1097 to 1165; these read KNED…SDLQ and HVDL…VLRS.

Belongs to the class-I aminoacyl-tRNA synthetase family. ValS type 1 subfamily. In terms of assembly, monomer.

It is found in the cytoplasm. It catalyses the reaction tRNA(Val) + L-valine + ATP = L-valyl-tRNA(Val) + AMP + diphosphate. Its function is as follows. Catalyzes the attachment of valine to tRNA(Val). As ValRS can inadvertently accommodate and process structurally similar amino acids such as threonine, to avoid such errors, it has a 'posttransfer' editing activity that hydrolyzes mischarged Thr-tRNA(Val) in a tRNA-dependent manner. In Aquifex aeolicus (strain VF5), this protein is Valine--tRNA ligase.